The following is a 1314-amino-acid chain: AT-rich interactive domain-containing protein 4B (1314 aa).

Disordered stretches follow at residues 123–169 (LPLT…RKQT) and 266–306 (KTEL…EPFP). 3 positions are modified to phosphoserine: Ser276, Ser295, and Ser296. Over residues 277–305 (EAEEEEEEEDDEKEKEDNSSEEEEEIEPF) the composition is skewed to acidic residues. Residues 306–398 (PEERENFLQQ…YLYGFEEYCR (93 aa)) form the ARID domain. Residues Lys428 and Lys461 each participate in a glycyl lysine isopeptide (Lys-Gly) (interchain with G-Cter in SUMO2) cross-link. The segment covering 439 to 464 (NVEDSKNVMPKEETPAEDESERKENI) has biased composition (basic and acidic residues). Disordered regions lie at residues 439 to 577 (NVED…KVQV), 635 to 678 (IKHR…SPEM), 709 to 888 (ASES…EEKR), 943 to 1215 (KELF…RLPK), and 1256 to 1290 (VASI…SITA). A Phosphoserine modification is found at Ser482. Positions 486–511 (KEAHITKLEENENLEDKDGGRARTEE) are enriched in basic and acidic residues. Positions 531–567 (NKEEDEDDEEIEEEEEEDEEEDEDEDDDDNNEEEEFE) are enriched in acidic residues. A Tudor-knot domain is found at 572 to 624 (GMKVQVRYGRGKNQKMYEASIKDSDVEGGEALYLVHYCGWNVRYDEWIKADKI). Residues 643–656 (NKLDKEKDRDEKYS) show a composition bias toward basic and acidic residues. Residues Ser666, Ser668, Ser675, and Ser717 each carry the phosphoserine modification. Composition is skewed to basic and acidic residues over residues 722 to 754 (ERCT…KEEQ) and 778 to 787 (SPERLRKDME). Residue Lys751 forms a Glycyl lysine isopeptide (Lys-Gly) (interchain with G-Cter in SUMO2) linkage. Residues Ser778 and Ser790 each carry the phosphoserine modification. The segment covering 788-800 (AISEDTDFEEEDE) has biased composition (acidic residues). Thr793 carries the phosphothreonine modification. 3 stretches are compositionally biased toward basic and acidic residues: residues 808-817 (VKKDTTDKAL), 841-853 (GKKE…KEPL), and 997-1012 (KPIE…RKTE). The span at 1013–1023 (FPSSGSNSVLN) shows a compositional bias: polar residues. Residue Ser1016 is modified to Phosphoserine. Thr1028 bears the Phosphothreonine mark. Positions 1030-1051 (ESPSSVTITEASQQQSSVTVSV) are enriched in low complexity. Ser1031 carries the phosphoserine modification. Residues 1058–1067 (EEVRSIKSET) are compositionally biased toward basic and acidic residues. Over residues 1089 to 1103 (SSPAGFDASVSSSSS) the composition is skewed to low complexity. Basic residues predominate over residues 1132–1150 (KKQKRSHKATVVNNKKKGK). Thr1152 carries the phosphothreonine modification. Residues Ser1154, Ser1155, Ser1157, and Ser1161 each carry the phosphoserine modification. Polar residues predominate over residues 1164–1186 (ESVTKTQTIKSVPTGMKTHNSKS). The span at 1198 to 1210 (RNGDKDPDLKEPS) shows a compositional bias: basic and acidic residues. Residues 1227–1272 (ENMTSAERISILQEKLQEIRKHYLSLKSEVASIDRRRKRLKKKERE) adopt a coiled-coil conformation. A compositionally biased stretch (low complexity) spans 1274–1290 (AATSSSSSSPSSSSITA).

As to quaternary structure, component of a Sin3A corepressor complex consisting of SIN3A, SAP130, SUDS3/SAP45, SAP180, HDAC1 and HDAC2. Interacts with ARID4A. Interacts with AR. In terms of tissue distribution, expressed in Sertoli cells of the testis.

The protein localises to the nucleus. Functionally, acts as a transcriptional repressor. May function in the assembly and/or enzymatic activity of the Sin3A corepressor complex or in mediating interactions between the complex and other regulatory complexes. Plays a role in the regulation of epigenetic modifications at the PWS/AS imprinting center near the SNRPN promoter, where it might function as part of a complex with RB1 and ARID4A. Involved in spermatogenesis, together with ARID4A, where it functions as a transcriptional coactivator for AR (androgen receptor) and enhances expression of genes required for sperm maturation. Regulates expression of the tight junction protein CLDN3 in the testis, which is important for integrity of the blood-testis barrier. Plays a role in myeloid homeostasis where it regulates the histone methylation state of bone marrow cells and expression of various genes involved in hematopoiesis. May function as a leukemia suppressor. The sequence is that of AT-rich interactive domain-containing protein 4B (Arid4b) from Mus musculus (Mouse).